Here is a 313-residue protein sequence, read N- to C-terminus: Formate-nitrite transporter (313 aa).

Topologically, residues 1 to 47 (MPKSNTKYVIDPLSVKTSCSSEESYIRCVEYGKSKAHYSSLILLAKA) are cytoplasmic. The chain crosses the membrane as a helical span at residues 48–68 (ILAGVFVGVCAHASGIAGGLF). The Extracellular portion of the chain corresponds to 69 to 77 (YYHKLREYV). A helical transmembrane segment spans residues 78–98 (GASMSAFVYGFTFPIAFLCII). Residues 99 to 128 (CTGSDLFTGNTLAVTTALLHGKVSCLEYVR) are Cytoplasmic-facing. The chain crosses the membrane as a helical span at residues 129 to 149 (VMCISLFGNYVGAVSFAFFVS). Residues 150–185 (YGSGAFHKKEQVDKNHIFQFLNDIAVKKVNHTFVEC) lie on the Extracellular side of the membrane. N-linked (GlcNAc...) asparagine glycosylation occurs at Asn179. Residues 186-206 (ICLAIGCNIFVCLAVYFVLSI) traverse the membrane as a helical segment. Topologically, residues 207–211 (KDGSG) are cytoplasmic. The helical transmembrane segment at 212–232 (MVFSVFFAVYAFAIAGYEHII) threads the bilayer. Residues 233 to 260 (ANIYTLNISLMIDTEVSFTQVYFKNLLP) lie on the Extracellular side of the membrane. An N-linked (GlcNAc...) asparagine glycan is attached at Asn239. Residues 261-281 (TLIGNYIAGALVLACPLFFIY) form a helical membrane-spanning segment. Topologically, residues 282–313 (RSYYINYEKMNEPSGGSLRSISIEMKNDGGAT) are cytoplasmic.

The protein belongs to the FNT transporter (TC 1.A.16) family. As to quaternary structure, homopentamer.

Its subcellular location is the cell membrane. It is found in the vacuole membrane. The catalysed reaction is (S)-lactate(in) + H(+)(in) = (S)-lactate(out) + H(+)(out). It catalyses the reaction formate(in) + H(+)(in) = formate(out) + H(+)(out). It carries out the reaction pyruvate(out) + H(+)(out) = pyruvate(in) + H(+)(in). The enzyme catalyses acetate(out) + H(+)(out) = acetate(in) + H(+)(in). Inhibited by the Malaria Box compound MMV007839 and its derivatives BH296 and BH267.meta. Functionally, monocarboxylate-proton symporter that mediates the efflux of the waste product lactate in the intraerythrocytic parasites; active in acidic-to-neutral pH range. Transports L-lactate. The chain is Formate-nitrite transporter from Plasmodium ovale.